The chain runs to 225 residues: NAD(P)H-quinone oxidoreductase subunit K, chloroplastic (225 aa).

The [4Fe-4S] cluster site is built by C43, C44, C108, and C139.

The protein belongs to the complex I 20 kDa subunit family. NDH is composed of at least 16 different subunits, 5 of which are encoded in the nucleus. It depends on [4Fe-4S] cluster as a cofactor.

Its subcellular location is the plastid. It localises to the chloroplast thylakoid membrane. It catalyses the reaction a plastoquinone + NADH + (n+1) H(+)(in) = a plastoquinol + NAD(+) + n H(+)(out). The catalysed reaction is a plastoquinone + NADPH + (n+1) H(+)(in) = a plastoquinol + NADP(+) + n H(+)(out). NDH shuttles electrons from NAD(P)H:plastoquinone, via FMN and iron-sulfur (Fe-S) centers, to quinones in the photosynthetic chain and possibly in a chloroplast respiratory chain. The immediate electron acceptor for the enzyme in this species is believed to be plastoquinone. Couples the redox reaction to proton translocation, and thus conserves the redox energy in a proton gradient. The protein is NAD(P)H-quinone oxidoreductase subunit K, chloroplastic of Capsella bursa-pastoris (Shepherd's purse).